Reading from the N-terminus, the 614-residue chain is ATP-dependent RNA helicase dbp-3 (614 aa).

The segment at 1-138 is disordered; that stretch reads MSSTKKHSRS…GTTTPAASTN (138 aa). Over residues 9–36 the composition is skewed to basic and acidic residues; sequence RSEGEEKDARLAKKVKTDETPVDGEVKK. Basic residues-rich tracts occupy residues 37-58 and 91-109; these read ERKKDKKEKKDKKEKKDKKSKK and KKEKKDKKEKKDKKEKKAK. A compositionally biased stretch (low complexity) spans 117–138; that stretch reads EESTSASKATTNGTTTPAASTN. Residues 180–207 carry the Q motif motif; sequence MNFSQLPQSNLISKNPFAAYTNPTPIQS. A Helicase ATP-binding domain is found at 210–394; the sequence is WPFSLSGRDV…ESYMINPAQV (185 aa). 223–230 is a binding site for ATP; it reads AETGSGKT. A DEAD box motif is present at residues 340-343; that stretch reads DEAD. The region spanning 435-584 is the Helicase C-terminal domain; sequence RLYELLKEAQ…PVPEELLKFG (150 aa).

Belongs to the DEAD box helicase family. DDX5/DBP2 subfamily.

The protein resides in the nucleus. The protein localises to the nucleolus. The enzyme catalyses ATP + H2O = ADP + phosphate + H(+). ATP-dependent RNA helicase required for 60S ribosomal subunit synthesis. Involved in efficient pre-rRNA processing, predominantly at site A3, which is necessary for the normal formation of 25S and 5.8S rRNAs. In Neurospora crassa (strain ATCC 24698 / 74-OR23-1A / CBS 708.71 / DSM 1257 / FGSC 987), this protein is ATP-dependent RNA helicase dbp-3 (dbp-3).